Here is a 231-residue protein sequence, read N- to C-terminus: Ureidoacrylate amidohydrolase RutB (231 aa).

Catalysis depends on D25, which acts as the Proton acceptor. The active site involves K134. Residue C167 is the Nucleophile of the active site.

This sequence belongs to the isochorismatase family. RutB subfamily.

The enzyme catalyses (Z)-3-ureidoacrylate + H2O + H(+) = (Z)-3-aminoacrylate + NH4(+) + CO2. The catalysed reaction is (Z)-3-ureidoacrylate + H2O = (Z)-3-aminoacrylate + carbamate + H(+). It carries out the reaction (Z)-2-methylureidoacrylate + H2O + H(+) = (Z)-2-methylaminoacrylate + NH4(+) + CO2. Functionally, hydrolyzes ureidoacrylate to form aminoacrylate and carbamate. The carbamate hydrolyzes spontaneously, thereby releasing one of the nitrogen atoms of the pyrimidine ring as ammonia and one of its carbon atoms as CO2. The protein is Ureidoacrylate amidohydrolase RutB of Escherichia coli O9:H4 (strain HS).